Consider the following 517-residue polypeptide: Crotonobetaine/carnitine--CoA ligase (517 aa).

The protein belongs to the ATP-dependent AMP-binding enzyme family.

It carries out the reaction 4-(trimethylamino)butanoate + ATP + CoA = 4-(trimethylamino)butanoyl-CoA + AMP + diphosphate. The enzyme catalyses crotonobetaine + ATP + CoA = crotonobetainyl-CoA + AMP + diphosphate. The catalysed reaction is (R)-carnitine + ATP + CoA = (R)-carnitinyl-CoA + AMP + diphosphate. Its pathway is amine and polyamine metabolism; carnitine metabolism. Its function is as follows. Catalyzes the transfer of CoA to carnitine, generating the initial carnitinyl-CoA needed for the CaiB reaction cycle. Also has activity toward crotonobetaine and gamma-butyrobetaine. This chain is Crotonobetaine/carnitine--CoA ligase, found in Escherichia coli (strain K12 / MC4100 / BW2952).